Reading from the N-terminus, the 291-residue chain is Undecaprenyl-diphosphatase (291 aa).

The next 8 helical transmembrane spans lie at 1-21, 48-68, 102-122, 126-146, 162-182, 203-223, 231-251, and 267-287; these read MFII…LTEF, SAFT…AWVF, LHVL…DDFI, LFSV…MIIA, ISYF…WPGF, SDFT…LSLL, IADI…GLIA, and FAIY…GFGI.

It belongs to the UppP family.

The protein resides in the cell membrane. The catalysed reaction is di-trans,octa-cis-undecaprenyl diphosphate + H2O = di-trans,octa-cis-undecaprenyl phosphate + phosphate + H(+). Functionally, catalyzes the dephosphorylation of undecaprenyl diphosphate (UPP). Confers resistance to bacitracin. The protein is Undecaprenyl-diphosphatase of Staphylococcus aureus (strain MRSA252).